The following is a 258-amino-acid chain: Imidazole glycerol phosphate synthase subunit HisF (258 aa).

Active-site residues include Asp-11 and Asp-130.

It belongs to the HisA/HisF family. As to quaternary structure, heterodimer of HisH and HisF.

It localises to the cytoplasm. It carries out the reaction 5-[(5-phospho-1-deoxy-D-ribulos-1-ylimino)methylamino]-1-(5-phospho-beta-D-ribosyl)imidazole-4-carboxamide + L-glutamine = D-erythro-1-(imidazol-4-yl)glycerol 3-phosphate + 5-amino-1-(5-phospho-beta-D-ribosyl)imidazole-4-carboxamide + L-glutamate + H(+). Its pathway is amino-acid biosynthesis; L-histidine biosynthesis; L-histidine from 5-phospho-alpha-D-ribose 1-diphosphate: step 5/9. IGPS catalyzes the conversion of PRFAR and glutamine to IGP, AICAR and glutamate. The HisF subunit catalyzes the cyclization activity that produces IGP and AICAR from PRFAR using the ammonia provided by the HisH subunit. This Xanthomonas oryzae pv. oryzae (strain MAFF 311018) protein is Imidazole glycerol phosphate synthase subunit HisF.